The primary structure comprises 396 residues: Protein ANTAGONIST OF LIKE HETEROCHROMATIN PROTEIN 1 (396 aa).

Composition is skewed to basic residues over residues Met1–Lys12 and Lys20–Arg29. Positions Met1 to Arg29 are disordered. The Nuclear localization signal signature appears at Gln6 to Lys13. The 166-residue stretch at Ile183–Asn348 folds into the DDE Tnp4 domain.

The protein belongs to the HARBI1 family. As to quaternary structure, interacts with core components of POLYCOMB REPRESSIVE COMPLEX 2 (PRC2), a PcG protein complex with H3K27me3 histone methyltransferase activity. Associates with plant-specific PRC2 accessory components such as MSI1, EMF2, VRN2, FIE and CLF. The cofactor is a divalent metal cation. In terms of tissue distribution, expressed in roots, inflorescence stems, seedlings, leaves, flower buds, inflorescences, and siliques.

It localises to the nucleus. In terms of biological role, transposase-derived protein that may have nuclease activity. Antagonist of polycomb-group (PcG) protein-mediated chromatin silencing, probably by preventing the association of POLYCOMB REPRESSIVE COMPLEX 2 (PRC2) with its accessory components. Needed for full reactivation of several floral homeotic genes that are repressed by PcG. In Arabidopsis thaliana (Mouse-ear cress), this protein is Protein ANTAGONIST OF LIKE HETEROCHROMATIN PROTEIN 1.